The primary structure comprises 345 residues: Methylthioribose-1-phosphate isomerase 2 (345 aa).

Substrate contacts are provided by residues 47–49, Arg-88, and Gln-194; that span reads RGA. Asp-235 acts as the Proton donor in catalysis. 245 to 246 serves as a coordination point for substrate; the sequence is NK.

Belongs to the eIF-2B alpha/beta/delta subunits family. MtnA subfamily.

It carries out the reaction 5-(methylsulfanyl)-alpha-D-ribose 1-phosphate = 5-(methylsulfanyl)-D-ribulose 1-phosphate. The protein operates within amino-acid biosynthesis; L-methionine biosynthesis via salvage pathway; L-methionine from S-methyl-5-thio-alpha-D-ribose 1-phosphate: step 1/6. In terms of biological role, catalyzes the interconversion of methylthioribose-1-phosphate (MTR-1-P) into methylthioribulose-1-phosphate (MTRu-1-P). The protein is Methylthioribose-1-phosphate isomerase 2 of Pseudothermotoga lettingae (strain ATCC BAA-301 / DSM 14385 / NBRC 107922 / TMO) (Thermotoga lettingae).